The sequence spans 575 residues: Arginine--tRNA ligase (575 aa).

The short motif at 131-141 is the 'HIGH' region element; it reads ANPTGPLHVGH.

The protein belongs to the class-I aminoacyl-tRNA synthetase family. Monomer.

The protein resides in the cytoplasm. It carries out the reaction tRNA(Arg) + L-arginine + ATP = L-arginyl-tRNA(Arg) + AMP + diphosphate. The chain is Arginine--tRNA ligase from Jannaschia sp. (strain CCS1).